The sequence spans 134 residues: Cytochrome b5 (134 aa).

Position 2 is an N-acetylalanine (A2). N6-acetyllysine occurs at positions 7, 10, and 19. The Cytochrome b5 heme-binding domain maps to 9–85 (VKYYTLEEIQ…SKTFIIGELH (77 aa)). Residues H44 and H68 each contribute to the heme site. A helical transmembrane segment spans residues 109 to 131 (WWTNWLIPAISALFVALIYHLYT).

The protein belongs to the cytochrome b5 family.

Its subcellular location is the endoplasmic reticulum membrane. It localises to the microsome membrane. Functionally, cytochrome b5 is a membrane-bound hemoprotein functioning as an electron carrier for several membrane-bound oxygenases. The chain is Cytochrome b5 (CYB5A) from Bos taurus (Bovine).